Consider the following 94-residue polypeptide: MTDETLRLTARITGVVQGVGFRYWTARKADELLLKGTVRNSADGSVELVAEGSAADVDSIVKWLHSSRAPGRVENVDFQVSDATGEFDDFRIID.

The Acylphosphatase-like domain occupies 7–94; the sequence is RLTARITGVV…GEFDDFRIID (88 aa). Active-site residues include Arg22 and Asn40.

This sequence belongs to the acylphosphatase family.

The enzyme catalyses an acyl phosphate + H2O = a carboxylate + phosphate + H(+). This Paenarthrobacter aurescens (strain TC1) protein is Acylphosphatase (acyP).